Here is a 1467-residue protein sequence, read N- to C-terminus: Actin cytoskeleton-regulatory complex protein pan1 (1467 aa).

Positions 1 to 157 are disordered; the sequence is MYSSSNSFLG…PPPKSSGSKI (157 aa). Over residues 25 to 48 the composition is skewed to low complexity; the sequence is QPPYSQLPQGQQQIPQQTGFQPQP. Polar residues predominate over residues 50–75; it reads GYGSQSASHLQPQPTGFPTGQLQPQF. Low complexity predominate over residues 77-101; it reads GFPGAAPPQQQQQFGGYQAPAQQPQ. Over residues 129–139 the composition is skewed to polar residues; the sequence is RTSSEIANSFS. The region spanning 169–257 is the EH 1 domain; sequence DQAKFEQLFK…DKIKNEVSGM (89 aa). The region spanning 201–236 is the EF-hand 1 domain; the sequence is LPGSELSKIWVLSDTTKSGQLFFPEFALAMYLCNLR. Positions 266 to 376 are disordered; the sequence is PDTEPQGAAR…PQATGYNGPR (111 aa). The segment covering 292 to 301 has biased composition (pro residues); sequence PPAPQHPKPQ. 2 stretches are compositionally biased toward polar residues: residues 305–314 and 340–370; these read NAQFLSQLAA and LAPQ…PQAT. Positions 458 to 547 constitute an EH 2 domain; that stretch reads EKKIYDDLFR…PELIPPSTRN (90 aa). An EF-hand 2 domain is found at 491 to 526; that stretch reads LDRKDLERIWTLADPNNRGRLNMDEFAVAMHLIYRK. 4 disordered regions span residues 613–643, 822–864, 888–1087, and 1101–1467; these read AGYR…EELS, RADR…HERR, RTAH…ELLK, and EQVR…RVLD. The stretch at 634–758 forms a coiled coil; that stretch reads TSQASEEELS…LFRLKDAKAH (125 aa). Residues 892–912 are compositionally biased toward basic and acidic residues; sequence IRKEEESRASAQEQRLRHEEP. Residues 919-934 are compositionally biased toward low complexity; it reads LSPAPSAGSAGSLPGS. Basic and acidic residues-rich tracts occupy residues 935–953, 973–1009, 1054–1087, 1101–1129, and 1136–1153; these read THED…RIAE, RQER…EQRS, AARE…ELLK, EQVR…EKEA, and AEIE…LELE. Residues 965 to 1162 adopt a coiled-coil conformation; that stretch reads DTSETLLQRQ…ERLDEESSSD (198 aa). Over residues 1154 to 1165 the composition is skewed to acidic residues; the sequence is RLDEESSSDDEG. The span at 1171 to 1182 shows a compositional bias: polar residues; sequence PEDSTPTQSQLL. Residues 1183 to 1197 are compositionally biased toward low complexity; the sequence is PTVTPAAPVSAPESE. Over residues 1279-1288 the composition is skewed to basic and acidic residues; sequence LERKSRARPE. 2 stretches are compositionally biased toward pro residues: residues 1369–1381 and 1389–1430; these read AAPP…PPAA and VAPP…PTPA. A WH2 domain is found at 1434 to 1451; that stretch reads DRSALLASIQKGKGLRKV.

This sequence belongs to the PAN1 family. As to quaternary structure, component of the PAN1 actin cytoskeleton-regulatory complex.

It localises to the cell membrane. It is found in the endosome membrane. Its subcellular location is the cytoplasm. The protein localises to the cytoskeleton. The protein resides in the actin patch. Component of the PAN1 actin cytoskeleton-regulatory complex required for the internalization of endosomes during actin-coupled endocytosis. The complex links the site of endocytosis to the cell membrane-associated actin cytoskeleton. Mediates uptake of external molecules and vacuolar degradation of plasma membrane proteins. Plays a role in the proper organization of the cell membrane-associated actin cytoskeleton and promotes its destabilization. In Aspergillus fumigatus (strain CBS 144.89 / FGSC A1163 / CEA10) (Neosartorya fumigata), this protein is Actin cytoskeleton-regulatory complex protein pan1 (pan1).